The sequence spans 547 residues: ATP-dependent RNA helicase ROK1 (547 aa).

The Q motif signature appears at 111–139 (DLITRFNLHPYLLANLKKNKYTDPTPIQC). The Helicase ATP-binding domain maps to 142–324 (IPTMLNGRDL…NSIMSTDPLR (183 aa)). ATP is bound at residue 155-162 (APTGSGKT). The DEAD box signature appears at 272–275 (DEAD). Positions 336–498 (TVEQKLVYAG…EVPDWLNNLA (163 aa)) constitute a Helicase C-terminal domain. Residues 511–547 (RPIKRKKISTQHALANNKKKRAKQQMKGLKKMKKDDE) are disordered. Residues 527-547 (NKKKRAKQQMKGLKKMKKDDE) show a composition bias toward basic residues.

It belongs to the DEAD box helicase family. DDX52/ROK1 subfamily. As to quaternary structure, interacts with the U3 snoRNA and is associated with the 90S and 40S pre-ribosomes.

The protein localises to the nucleus. It localises to the nucleolus. It catalyses the reaction ATP + H2O = ADP + phosphate + H(+). Its function is as follows. ATP-dependent RNA helicase involved in 40S ribosomal subunit biogenesis. Required for the processing and cleavage of 35S pre-rRNA at sites A0, A1, and A2, leading to mature 18S rRNA. The protein is ATP-dependent RNA helicase ROK1 (ROK1) of Yarrowia lipolytica (strain CLIB 122 / E 150) (Yeast).